Here is a 209-residue protein sequence, read N- to C-terminus: Large ribosomal subunit protein eL13 (209 aa).

This sequence belongs to the eukaryotic ribosomal protein eL13 family. In terms of assembly, component of the 60S large ribosomal subunit (LSU).

The protein localises to the cytoplasm. Its function is as follows. Component of the ribosome, a large ribonucleoprotein complex responsible for the synthesis of proteins in the cell. The small ribosomal subunit (SSU) binds messenger RNAs (mRNAs) and translates the encoded message by selecting cognate aminoacyl-transfer RNA (tRNA) molecules. The large subunit (LSU) contains the ribosomal catalytic site termed the peptidyl transferase center (PTC), which catalyzes the formation of peptide bonds, thereby polymerizing the amino acids delivered by tRNAs into a polypeptide chain. The nascent polypeptides leave the ribosome through a tunnel in the LSU and interact with protein factors that function in enzymatic processing, targeting, and the membrane insertion of nascent chains at the exit of the ribosomal tunnel. As part of the LSU, it is probably required for its formation and the maturation of rRNAs. The protein is Large ribosomal subunit protein eL13 (rpl13) of Dictyostelium discoideum (Social amoeba).